Consider the following 461-residue polypeptide: Elongation factor 1-alpha, oocyte form (461 aa).

At glycine 2 the chain carries N,N,N-trimethylglycine. The tr-type G domain occupies 5 to 242 (KIHINIVVIG…DCIIPPQRPT (238 aa)). A G1 region spans residues 14-21 (GHVDSGKS). 14–21 (GHVDSGKS) contacts GTP. The interval 70 to 74 (GITID) is G2. The tract at residues 91–94 (DAPG) is G3. GTP contacts are provided by residues 91-95 (DAPGH) and 153-156 (NKMD). Residues 153-156 (NKMD) are G4. The segment at 194-196 (SGW) is G5. 5-glutamyl glycerylphosphorylethanolamine occurs at positions 301 and 374.

Belongs to the TRAFAC class translation factor GTPase superfamily. Classic translation factor GTPase family. EF-Tu/EF-1A subfamily. As to expression, oocyte.

It localises to the cytoplasm. Functionally, this protein promotes the GTP-dependent binding of aminoacyl-tRNA to the A-site of ribosomes during protein biosynthesis. The chain is Elongation factor 1-alpha, oocyte form from Xenopus laevis (African clawed frog).